The chain runs to 239 residues: Large ribosomal subunit protein uL1 (239 aa).

This sequence belongs to the universal ribosomal protein uL1 family. Part of the 50S ribosomal subunit.

Binds directly to 23S rRNA. The L1 stalk is quite mobile in the ribosome, and is involved in E site tRNA release. Functionally, protein L1 is also a translational repressor protein, it controls the translation of the L11 operon by binding to its mRNA. The protein is Large ribosomal subunit protein uL1 of Mycolicibacterium gilvum (strain PYR-GCK) (Mycobacterium gilvum (strain PYR-GCK)).